A 266-amino-acid polypeptide reads, in one-letter code: Pyridoxal phosphate phosphatase YigL (266 aa).

The active-site Nucleophile is Asp8. Asp8 is a binding site for Mg(2+). Leu9 provides a ligand contact to phosphate. Asp10 serves as a coordination point for Mg(2+). Phosphate contacts are provided by residues 42 to 43 and Lys191; that span reads TG. Asp214 provides a ligand contact to Mg(2+). Asn217 serves as a coordination point for phosphate.

This sequence belongs to the HAD-like hydrolase superfamily. Cof family. Requires Mg(2+) as cofactor. It depends on Mn(2+) as a cofactor. Co(2+) is required as a cofactor. Zn(2+) serves as cofactor.

The catalysed reaction is pyridoxal 5'-phosphate + H2O = pyridoxal + phosphate. The enzyme catalyses sugar phosphate + H2O = sugar + phosphate.. Catalyzes Strongly the dephosphorylation of pyridoxal-phosphate (PLP) and moderately the dephosphorylation of 2-deoxyglucose 6-phosphate (2bGLU6P) and beta-glucose 6-phosphate (bGlu6P). Also hydrolyzes both purines (GMP and IMP) and pyrimidines as secondary substrates. This Escherichia coli (strain K12) protein is Pyridoxal phosphate phosphatase YigL (yigL).